The chain runs to 523 residues: UDP-glucuronosyltransferase 2B16 (523 aa).

The signal sequence occupies residues 1-16 (LLLLLQLSCCFSSGSC). The residue at position 129 (K129) is an N6-succinyllysine. N309 carries N-linked (GlcNAc...) asparagine glycosylation. The chain crosses the membrane as a helical span at residues 487-503 (VIGFLLACLTITTYLVI).

The protein belongs to the UDP-glycosyltransferase family.

The protein localises to the microsome membrane. The protein resides in the endoplasmic reticulum membrane. The enzyme catalyses glucuronate acceptor + UDP-alpha-D-glucuronate = acceptor beta-D-glucuronoside + UDP + H(+). UDPGT is of major importance in the conjugation and subsequent elimination of potentially toxic xenobiotics and endogenous compounds. Acts on small phenolic agents such as 2-beta-naphthol and 4-methylumbelliferone as well as bulky phenolic compounds like 2-hydroxy- and 4-hydroxybiphenyl. In contrast to 2B13 it is active toward 4-hydroxyesterone. The chain is UDP-glucuronosyltransferase 2B16 (UGT2B16) from Oryctolagus cuniculus (Rabbit).